Here is a 209-residue protein sequence, read N- to C-terminus: Ribosomal RNA large subunit methyltransferase E (209 aa).

S-adenosyl-L-methionine contacts are provided by G63, W65, D83, D99, and D124. The Proton acceptor role is filled by K164.

It belongs to the class I-like SAM-binding methyltransferase superfamily. RNA methyltransferase RlmE family.

Its subcellular location is the cytoplasm. The enzyme catalyses uridine(2552) in 23S rRNA + S-adenosyl-L-methionine = 2'-O-methyluridine(2552) in 23S rRNA + S-adenosyl-L-homocysteine + H(+). Its function is as follows. Specifically methylates the uridine in position 2552 of 23S rRNA at the 2'-O position of the ribose in the fully assembled 50S ribosomal subunit. The sequence is that of Ribosomal RNA large subunit methyltransferase E from Alkalilimnicola ehrlichii (strain ATCC BAA-1101 / DSM 17681 / MLHE-1).